A 170-amino-acid chain; its full sequence is Translocon-associated protein subunit gamma (170 aa).

The Lumenal portion of the chain corresponds to M1–Y24. A helical membrane pass occupies residues F25–M45. The Cytoplasmic segment spans residues S46–M51. Residues I52–I72 traverse the membrane as a helical segment. At Y73–S121 the chain is on the lumenal side. Residues I122–F141 form a helical membrane-spanning segment. Residues K142 to P145 lie on the Cytoplasmic side of the membrane. The chain crosses the membrane as a helical span at residues L146–S168.

Belongs to the TRAP-gamma family. As to quaternary structure, heterotrimer of TRAP-alpha, TRAP-beta and TRAP-gamma.

The protein resides in the endoplasmic reticulum membrane. Its function is as follows. TRAP proteins are part of a complex whose function is to bind calcium to the ER membrane and thereby regulate the retention of ER resident proteins. This chain is Translocon-associated protein subunit gamma (ssr3), found in Dictyostelium discoideum (Social amoeba).